Consider the following 223-residue polypeptide: Cytotoxic T-lymphocyte protein 4 (223 aa).

Residues 1-35 form the signal peptide; sequence MAGFGFRRHGVQPDLASRTWPCTALFSLLFIPVFS. Over 36 to 161 the chain is Extracellular; it reads KGMHAAQPAV…IDPEPCPDSD (126 aa). The region spanning 39-140 is the Ig-like V-type domain; the sequence is HAAQPAVVLA…VELMYPPPYY (102 aa). The homodimerization stretch occupies residues 46–50; sequence VLASS. 2 cysteine pairs are disulfide-bonded: cysteine 58–cysteine 129 and cysteine 85–cysteine 103. Asparagine 113 carries N-linked (GlcNAc...) asparagine glycosylation. The interval 134-139 is important for interaction with CD80 and CD86; that stretch reads MYPPPY. The N-linked (GlcNAc...) asparagine glycan is linked to asparagine 145. The tract at residues 150-155 is homodimerization; it reads YVIDPE. The chain crosses the membrane as a helical span at residues 162–182; sequence FLLWILAAVSSGLFFYSFLIT. Over 183–223 the chain is Cytoplasmic; sequence AVSLSKMLKKRSPLTTGVYVKMPPTGPECEKQFQPYFIPIN. The residue at position 201 (tyrosine 201) is a Phosphotyrosine; by TXK and JAK2.

In terms of assembly, homodimer; disulfide-linked. Binds to CD80/B7-1 and CD86/B7.2. Interacts with ICOSLG. N-glycosylation is important for dimerization. Post-translationally, phosphorylation at Tyr-201 prevents binding to the AP-2 adapter complex, blocks endocytosis, and leads to retention of CTLA4 on the cell surface.

Its subcellular location is the cell membrane. Functionally, inhibitory receptor acting as a major negative regulator of T-cell responses. The affinity of CTLA4 for its natural B7 family ligands, CD80 and CD86, is considerably stronger than the affinity of their cognate stimulatory coreceptor CD28. The chain is Cytotoxic T-lymphocyte protein 4 (CTLA4) from Canis lupus familiaris (Dog).